Here is a 144-residue protein sequence, read N- to C-terminus: Large ribosomal subunit protein uL15 (144 aa).

The segment at 1-52 is disordered; it reads MRLNTLSPAEGAKHAPKRVGRGIGSGLGKTAGRGHKGQNSRSGGGVRRGFEG. The span at 21–31 shows a compositional bias: gly residues; it reads RGIGSGLGKTA.

It belongs to the universal ribosomal protein uL15 family. As to quaternary structure, part of the 50S ribosomal subunit.

Its function is as follows. Binds to the 23S rRNA. The sequence is that of Large ribosomal subunit protein uL15 from Yersinia pseudotuberculosis serotype O:1b (strain IP 31758).